Here is a 466-residue protein sequence, read N- to C-terminus: FBD-associated F-box protein At5g22730 (466 aa).

One can recognise an F-box domain in the interval 27 to 80 (EDLISKLPDSLITQILLYLPIKDIVRTSSLSSRWKSLWLLIPRLDLDSEEFQDY). One can recognise an FBD domain in the interval 385 to 436 (DEPIIFSSVPRCLVSSLESVEIKKFNGRPAKMEVARYFLENSGVLQKLVLHL).

The chain is FBD-associated F-box protein At5g22730 from Arabidopsis thaliana (Mouse-ear cress).